The chain runs to 177 residues: ATP synthase subunit delta (177 aa).

It belongs to the ATPase delta chain family. F-type ATPases have 2 components, F(1) - the catalytic core - and F(0) - the membrane proton channel. F(1) has five subunits: alpha(3), beta(3), gamma(1), delta(1), epsilon(1). F(0) has three main subunits: a(1), b(2) and c(10-14). The alpha and beta chains form an alternating ring which encloses part of the gamma chain. F(1) is attached to F(0) by a central stalk formed by the gamma and epsilon chains, while a peripheral stalk is formed by the delta and b chains.

It is found in the cell inner membrane. F(1)F(0) ATP synthase produces ATP from ADP in the presence of a proton or sodium gradient. F-type ATPases consist of two structural domains, F(1) containing the extramembraneous catalytic core and F(0) containing the membrane proton channel, linked together by a central stalk and a peripheral stalk. During catalysis, ATP synthesis in the catalytic domain of F(1) is coupled via a rotary mechanism of the central stalk subunits to proton translocation. Its function is as follows. This protein is part of the stalk that links CF(0) to CF(1). It either transmits conformational changes from CF(0) to CF(1) or is implicated in proton conduction. This Neisseria gonorrhoeae (strain NCCP11945) protein is ATP synthase subunit delta.